A 178-amino-acid polypeptide reads, in one-letter code: Large ribosomal subunit protein uL6 (178 aa).

It belongs to the universal ribosomal protein uL6 family. As to quaternary structure, part of the 50S ribosomal subunit.

In terms of biological role, this protein binds to the 23S rRNA, and is important in its secondary structure. It is located near the subunit interface in the base of the L7/L12 stalk, and near the tRNA binding site of the peptidyltransferase center. The chain is Large ribosomal subunit protein uL6 from Ligilactobacillus salivarius (strain UCC118) (Lactobacillus salivarius).